Reading from the N-terminus, the 730-residue chain is Hemolytic phospholipase C (730 aa).

The tat-type signal signal peptide spans 1–38 (MTENWKFRRRTFLKHGAQAATLAGLSGLFPETLRRALA).

This sequence belongs to the bacterial phospholipase C family. In terms of processing, predicted to be exported by the Tat system. The position of the signal peptide cleavage has not been experimentally proven.

The enzyme catalyses a 1,2-diacyl-sn-glycero-3-phosphocholine + H2O = phosphocholine + a 1,2-diacyl-sn-glycerol + H(+). Hydrolyzes sphingomyelin in addition to phosphatidylcholine. This chain is Hemolytic phospholipase C (plcH), found in Pseudomonas aeruginosa (strain ATCC 15692 / DSM 22644 / CIP 104116 / JCM 14847 / LMG 12228 / 1C / PRS 101 / PAO1).